The primary structure comprises 419 residues: Ubiquitin receptor RAD23c (419 aa).

Residues 1-79 (MKIFVKTLKG…IVIMMNKSKP (79 aa)) form the Ubiquitin-like domain. The span at 83–118 (AASSASAGTSQAKSIPPSTSQPSISPQTPASVSAPV) shows a compositional bias: low complexity. The disordered stretch occupies residues 83–172 (AASSASAGTS…DSAPVGSQGD (90 aa)). Residues 119–135 (APAPTRPPPPAPTPTPA) are compositionally biased toward pro residues. The span at 136-146 (PVAATETVTTP) shows a compositional bias: low complexity. The region spanning 185 to 228 (SNLESTIQQILDMGGGTWDRETVVLALRAAFNNPERAVEYLYTG) is the UBA 1 domain. The segment at 235 to 282 (VPPVARPPASAGQPANPPAQTQQPAAAPASGPNANPLDLFPQGLPNVG) is disordered. Residues 245 to 270 (AGQPANPPAQTQQPAAAPASGPNANP) are compositionally biased toward low complexity. The STI1 domain maps to 288–331 (GTLDFLRNSQQFQALRAMVQANPQVLQPMLQELGKQNPNLMRLI). In terms of domain architecture, UBA 2 spans 372-413 (THEEREAIERLEAMGFERALVLEVFFACNKNEELAANYLLDH).

The protein belongs to the RAD23 family. In terms of assembly, interacts with 'Lys-48'-linked polyubiquitin chains via its both UBA domains. Interacts with RPN10 via its ubiquitin-like domain. In terms of tissue distribution, widely expressed in the whole plant.

The protein resides in the nucleus. The protein localises to the cytoplasm. In terms of biological role, may be involved in nucleotide excision repair. Binds and presumably selects ubiquitin-conjugates for destruction. Prefers multiubiquitin chains rather than single ubiquitins, with a binding affinity for 'Lys-48'-linked ubiquitin chains. Acts as a ubiquitin receptor that associates with the 26S proteasomal docking subunit RPN10 for the indirect recognition of ubiquitinated substrates of ubiquitin/26S proteasome-mediated proteolysis (UPP). Involved in UV tolerance in hypocotyls, specifically in dark conditions. This Arabidopsis thaliana (Mouse-ear cress) protein is Ubiquitin receptor RAD23c.